Here is a 173-residue protein sequence, read N- to C-terminus: Small ribosomal subunit protein uS13 (173 aa).

A compositionally biased stretch (basic residues) spans 130–143 (GVRHKRGQKVRGQR). The tract at residues 130–155 (GVRHKRGQKVRGQRTKSTGRTEGTIG) is disordered.

It belongs to the universal ribosomal protein uS13 family. Part of the 30S ribosomal subunit. Forms a loose heterodimer with protein S19. Forms two bridges to the 50S subunit in the 70S ribosome.

Functionally, located at the top of the head of the 30S subunit, it contacts several helices of the 16S rRNA. In the 70S ribosome it contacts the 23S rRNA (bridge B1a) and protein L5 of the 50S subunit (bridge B1b), connecting the 2 subunits; these bridges are implicated in subunit movement. In Haloquadratum walsbyi (strain DSM 16790 / HBSQ001), this protein is Small ribosomal subunit protein uS13.